The chain runs to 94 residues: Putative defensin-like protein 88 (94 aa).

A signal peptide spans 1 to 26 (MATQKFSYFLLVLLMVFALILPSIIS). Disulfide bonds link C32/C72, C38/C59, and C48/C71.

Belongs to the DEFL family.

Its subcellular location is the secreted. In Arabidopsis thaliana (Mouse-ear cress), this protein is Putative defensin-like protein 88.